We begin with the raw amino-acid sequence, 107 residues long: UPF0102 protein CTN_0433 (107 aa).

This sequence belongs to the UPF0102 family.

This chain is UPF0102 protein CTN_0433, found in Thermotoga neapolitana (strain ATCC 49049 / DSM 4359 / NBRC 107923 / NS-E).